We begin with the raw amino-acid sequence, 354 residues long: Probable L-ascorbate-6-phosphate lactonase UlaG (354 aa).

It belongs to the UlaG family. It depends on a divalent metal cation as a cofactor.

It is found in the cytoplasm. It carries out the reaction L-ascorbate 6-phosphate + H2O = 3-dehydro-L-gulonate 6-phosphate. It participates in cofactor degradation; L-ascorbate degradation; D-xylulose 5-phosphate from L-ascorbate: step 1/4. Functionally, probably catalyzes the hydrolysis of L-ascorbate-6-P into 3-keto-L-gulonate-6-P. Is essential for L-ascorbate utilization under anaerobic conditions. The chain is Probable L-ascorbate-6-phosphate lactonase UlaG from Shigella flexneri.